The following is a 500-amino-acid chain: NAD(P)H-quinone oxidoreductase subunit 2 B, chloroplastic (500 aa).

Transmembrane regions (helical) follow at residues 14-34 (SILPECILISSLIIILLIDLT), 41-61 (WLYFISLTSLIISITVLLFQL), 78-98 (FNGIFRISIAFSSLLCIPLSM), 116-136 (LTATIGGMFLCGANDLIIIFI), 166-186 (LLMGGASSSILAYGFSWLYGL), 211-231 (ISIVLIFIIAGIAFKLSLVPF), 242-262 (APTSVIAFFSVTSKIAGLALA), 277-297 (WHLILEIIAILSMILGNFIAI), 305-325 (MLAYSSISQIGYFMIGVIAGD), 335-355 (YMLFYIFMNLGTFACITLFGL), 376-396 (ASFLALSLLSLGGIPPLAGFF), 409-429 (GLYLSVSVGLFTSVISIYYYL), and 467-487 (IIICVIGSTFSGIVINPVIAI).

The protein belongs to the complex I subunit 2 family. In terms of assembly, NDH is composed of at least 16 different subunits, 5 of which are encoded in the nucleus.

The protein resides in the plastid. It localises to the chloroplast thylakoid membrane. The catalysed reaction is a plastoquinone + NADH + (n+1) H(+)(in) = a plastoquinol + NAD(+) + n H(+)(out). It catalyses the reaction a plastoquinone + NADPH + (n+1) H(+)(in) = a plastoquinol + NADP(+) + n H(+)(out). In terms of biological role, NDH shuttles electrons from NAD(P)H:plastoquinone, via FMN and iron-sulfur (Fe-S) centers, to quinones in the photosynthetic chain and possibly in a chloroplast respiratory chain. The immediate electron acceptor for the enzyme in this species is believed to be plastoquinone. Couples the redox reaction to proton translocation, and thus conserves the redox energy in a proton gradient. The polypeptide is NAD(P)H-quinone oxidoreductase subunit 2 B, chloroplastic (Anthoceros angustus (Hornwort)).